The chain runs to 458 residues: UPF0210 protein MMP1427 (458 aa).

It belongs to the UPF0210 family.

This Methanococcus maripaludis (strain DSM 14266 / JCM 13030 / NBRC 101832 / S2 / LL) protein is UPF0210 protein MMP1427.